A 418-amino-acid chain; its full sequence is EPS I polysaccharide export inner membrane protein EpsF (418 aa).

The next 10 helical transmembrane spans lie at 21–41, 45–65, 142–162, 170–190, 222–242, 262–282, 296–316, 326–346, 347–367, and 377–397; these read VLVVIGMLLAVPMAFPLFPIA, CAAILAILLPLGRLQHVLATA, PLMVWAILIFISLMLVWIAIY, YVVFVAYLSTITLYALQGSAI, AGTHSSAAALLLVCATVMLFL, LLVLLVLAVAAVAFGSAEFVM, SAWEFQLAVEAVLACLFAWLF, LTYFLFVLLCASTSFFAPAVG, ARLFRYTYCFYIVYLCVFFFA, and KTLASLLFLASLGWAFYIVDV.

This sequence to S.marcescens SfuB.

It is found in the cell inner membrane. Functionally, probably involved in polymerization and/or export of exopolysaccharide EPS I which functions as a virulence factor. May play a role in export of EPS I or its intermediates across the membranes. This chain is EPS I polysaccharide export inner membrane protein EpsF (epsF), found in Ralstonia solanacearum (Pseudomonas solanacearum).